The sequence spans 312 residues: Malate dehydrogenase (312 aa).

NAD(+)-binding positions include 12-17 (GAGFTG) and Asp-36. Positions 87 and 93 each coordinate substrate. Residues Asn-100 and 123-125 (LTN) contribute to the NAD(+) site. Asn-125 serves as a coordination point for substrate. Phosphoserine is present on Ser-149. Residue Arg-156 coordinates substrate. His-180 serves as the catalytic Proton acceptor.

This sequence belongs to the LDH/MDH superfamily. MDH type 3 family.

It carries out the reaction (S)-malate + NAD(+) = oxaloacetate + NADH + H(+). Catalyzes the reversible oxidation of malate to oxaloacetate. The protein is Malate dehydrogenase of Bacillus cereus (strain ZK / E33L).